The following is a 717-amino-acid chain: DNA ligase (717 aa).

Residues 44–48 (DADYD), 93–94 (SL), and Glu127 each bind NAD(+). The N6-AMP-lysine intermediate role is filled by Lys129. 4 residues coordinate NAD(+): Arg150, Glu186, Lys302, and Lys326. The Zn(2+) site is built by Cys431, Cys434, Cys455, and Cys461. Positions 639–717 (ATDSPVAGKT…EDEWLALIGG (79 aa)) constitute a BRCT domain.

It belongs to the NAD-dependent DNA ligase family. LigA subfamily. Mg(2+) serves as cofactor. Mn(2+) is required as a cofactor.

It catalyses the reaction NAD(+) + (deoxyribonucleotide)n-3'-hydroxyl + 5'-phospho-(deoxyribonucleotide)m = (deoxyribonucleotide)n+m + AMP + beta-nicotinamide D-nucleotide.. Its function is as follows. DNA ligase that catalyzes the formation of phosphodiester linkages between 5'-phosphoryl and 3'-hydroxyl groups in double-stranded DNA using NAD as a coenzyme and as the energy source for the reaction. It is essential for DNA replication and repair of damaged DNA. This is DNA ligase from Rhizobium meliloti (strain 1021) (Ensifer meliloti).